Consider the following 429-residue polypeptide: Gamma-glutamyl phosphate reductase (429 aa).

It belongs to the gamma-glutamyl phosphate reductase family.

It localises to the cytoplasm. The enzyme catalyses L-glutamate 5-semialdehyde + phosphate + NADP(+) = L-glutamyl 5-phosphate + NADPH + H(+). Its pathway is amino-acid biosynthesis; L-proline biosynthesis; L-glutamate 5-semialdehyde from L-glutamate: step 2/2. In terms of biological role, catalyzes the NADPH-dependent reduction of L-glutamate 5-phosphate into L-glutamate 5-semialdehyde and phosphate. The product spontaneously undergoes cyclization to form 1-pyrroline-5-carboxylate. The chain is Gamma-glutamyl phosphate reductase from Methylibium petroleiphilum (strain ATCC BAA-1232 / LMG 22953 / PM1).